The primary structure comprises 212 residues: MNLSIAELRKSYGRAELNEDAAHADPLQQFDQWLGQAIAAQLPEPNAMTLATVGSDLRPSTRIVLIKGYDERGIVWFTNYDSRKGRQIAGNPCAALQFHWVELERVVRIEGLVQKVSDQESDAYFDSRPLDSRIGAWASPQSQVIAGRGVLLANAARYGAQFMLKPPRPQHWGGYRLEPDLWEFWQGRKSRLHDRLRYRMAGGQWVRERLAP.

Substrate is bound by residues arginine 9–tyrosine 12 and lysine 67. FMN-binding positions include arginine 62–lysine 67, phenylalanine 77–threonine 78, arginine 83, and lysine 84. Tyrosine 124, arginine 128, and serine 132 together coordinate substrate. FMN contacts are provided by residues glutamine 141–serine 142 and tryptophan 185. Arginine 191–histidine 193 serves as a coordination point for substrate. Residue arginine 195 coordinates FMN.

The protein belongs to the pyridoxamine 5'-phosphate oxidase family. Homodimer. The cofactor is FMN.

It catalyses the reaction pyridoxamine 5'-phosphate + O2 + H2O = pyridoxal 5'-phosphate + H2O2 + NH4(+). It carries out the reaction pyridoxine 5'-phosphate + O2 = pyridoxal 5'-phosphate + H2O2. Its pathway is cofactor metabolism; pyridoxal 5'-phosphate salvage; pyridoxal 5'-phosphate from pyridoxamine 5'-phosphate: step 1/1. The protein operates within cofactor metabolism; pyridoxal 5'-phosphate salvage; pyridoxal 5'-phosphate from pyridoxine 5'-phosphate: step 1/1. Catalyzes the oxidation of either pyridoxine 5'-phosphate (PNP) or pyridoxamine 5'-phosphate (PMP) into pyridoxal 5'-phosphate (PLP). The protein is Pyridoxine/pyridoxamine 5'-phosphate oxidase of Verminephrobacter eiseniae (strain EF01-2).